The following is a 365-amino-acid chain: Saoe class I histocompatibility antigen, C alpha chain (365 aa).

Positions 1–24 (MTIMAPRTLLLLLSGALSVTETWA) are cleaved as a signal peptide. The interval 25 to 114 (GSHSMRYFST…LLGYYNQSEA (90 aa)) is alpha-1. The Extracellular portion of the chain corresponds to 25–308 (GSHSMRYFST…EPPSQPTIPI (284 aa)). Asn110 carries an N-linked (GlcNAc...) asparagine glycan. An alpha-2 region spans residues 115 to 206 (GFHTIQWMYG…ENGKEMLQRA (92 aa)). 2 disulfides stabilise this stretch: Cys125–Cys188 and Cys227–Cys283. The segment at 207 to 298 (EPPKTHVTHH…GLPEPFTLRW (92 aa)) is alpha-3. In terms of domain architecture, Ig-like C1-type spans 209–297 (PKTHVTHHPV…EGLPEPFTLR (89 aa)). The connecting peptide stretch occupies residues 299–308 (EPPSQPTIPI). A helical transmembrane segment spans residues 309–332 (MGIVAILAILGAVVTGAVVAAVMW). Over 333 to 365 (RKKSSDKKGGSYSQAARSDSAQGSDVSLTACKV) the chain is Cytoplasmic. A disordered region spans residues 337–365 (SDKKGGSYSQAARSDSAQGSDVSLTACKV). The segment covering 346–359 (QAARSDSAQGSDVS) has biased composition (polar residues). Ser356 and Ser359 each carry phosphoserine.

The protein belongs to the MHC class I family. Heterodimer of an alpha chain and a beta chain (beta-2-microglobulin).

The protein resides in the membrane. Functionally, involved in the presentation of foreign antigens to the immune system. The polypeptide is Saoe class I histocompatibility antigen, C alpha chain (Saguinus oedipus (Cotton-top tamarin)).